The following is a 177-amino-acid chain: ATP synthase subunit delta (177 aa).

This sequence belongs to the ATPase delta chain family. In terms of assembly, F-type ATPases have 2 components, F(1) - the catalytic core - and F(0) - the membrane proton channel. F(1) has five subunits: alpha(3), beta(3), gamma(1), delta(1), epsilon(1). F(0) has three main subunits: a(1), b(2) and c(10-14). The alpha and beta chains form an alternating ring which encloses part of the gamma chain. F(1) is attached to F(0) by a central stalk formed by the gamma and epsilon chains, while a peripheral stalk is formed by the delta and b chains.

Its subcellular location is the cell inner membrane. In terms of biological role, f(1)F(0) ATP synthase produces ATP from ADP in the presence of a proton or sodium gradient. F-type ATPases consist of two structural domains, F(1) containing the extramembraneous catalytic core and F(0) containing the membrane proton channel, linked together by a central stalk and a peripheral stalk. During catalysis, ATP synthesis in the catalytic domain of F(1) is coupled via a rotary mechanism of the central stalk subunits to proton translocation. Its function is as follows. This protein is part of the stalk that links CF(0) to CF(1). It either transmits conformational changes from CF(0) to CF(1) or is implicated in proton conduction. This Shigella flexneri protein is ATP synthase subunit delta.